The following is a 96-amino-acid chain: Glutamyl-tRNA(Gln) amidotransferase subunit C (96 aa).

This sequence belongs to the GatC family. Heterotrimer of A, B and C subunits.

It catalyses the reaction L-glutamyl-tRNA(Gln) + L-glutamine + ATP + H2O = L-glutaminyl-tRNA(Gln) + L-glutamate + ADP + phosphate + H(+). The enzyme catalyses L-aspartyl-tRNA(Asn) + L-glutamine + ATP + H2O = L-asparaginyl-tRNA(Asn) + L-glutamate + ADP + phosphate + 2 H(+). Functionally, allows the formation of correctly charged Asn-tRNA(Asn) or Gln-tRNA(Gln) through the transamidation of misacylated Asp-tRNA(Asn) or Glu-tRNA(Gln) in organisms which lack either or both of asparaginyl-tRNA or glutaminyl-tRNA synthetases. The reaction takes place in the presence of glutamine and ATP through an activated phospho-Asp-tRNA(Asn) or phospho-Glu-tRNA(Gln). The sequence is that of Glutamyl-tRNA(Gln) amidotransferase subunit C from Nostoc sp. (strain PCC 7120 / SAG 25.82 / UTEX 2576).